The following is a 680-amino-acid chain: Translation factor GUF1 homolog, chloroplastic (680 aa).

A chloroplast-targeting transit peptide spans 1–51 (MAAKINSLAALVSLQASHHHHXSTPFYFSPFSPHLSTTLTSRRRSLRSAVV). Positions 83–264 (SNIRNFCIIA…AIVKRIPPPC (182 aa)) constitute a tr-type G domain. Residues 92 to 99 (AHIDHGKS), 157 to 161 (DTPGH), and 211 to 214 (NKID) each bind GTP.

Belongs to the TRAFAC class translation factor GTPase superfamily. Classic translation factor GTPase family. LepA subfamily.

Its subcellular location is the plastid. The protein resides in the chloroplast. It catalyses the reaction GTP + H2O = GDP + phosphate + H(+). In terms of biological role, promotes chloroplast protein synthesis. May act as a fidelity factor of the translation reaction, by catalyzing a one-codon backward translocation of tRNAs on improperly translocated ribosomes. This Vitis vinifera (Grape) protein is Translation factor GUF1 homolog, chloroplastic.